The chain runs to 202 residues: Ras-related protein RABD2b (202 aa).

GTP contacts are provided by residues 15 to 23 (GDSGVGKSC), 33 to 40 (YLDSYIST), 63 to 67 (DTAGQ), 121 to 124 (NKND), and 151 to 153 (SAK). Positions 37-45 (YISTIGVDF) match the Effector region motif. The tract at residues 174–202 (ASQPAGGAKPPTVQIRGQPVNQQSGCCSS) is disordered. Over residues 192 to 202 (PVNQQSGCCSS) the composition is skewed to polar residues. 2 S-geranylgeranyl cysteine lipidation sites follow: cysteine 199 and cysteine 200.

Belongs to the small GTPase superfamily. Rab family.

The protein localises to the golgi apparatus. Its subcellular location is the trans-Golgi network membrane. The protein resides in the golgi apparatus membrane. Functionally, protein transport. Regulator of membrane traffic from the Golgi apparatus towards the endoplasmic reticulum (ER). The chain is Ras-related protein RABD2b (RABD2B) from Arabidopsis thaliana (Mouse-ear cress).